The sequence spans 131 residues: Ribosome-binding factor A (131 aa).

It belongs to the RbfA family. Monomer. Binds 30S ribosomal subunits, but not 50S ribosomal subunits or 70S ribosomes.

The protein localises to the cytoplasm. Functionally, one of several proteins that assist in the late maturation steps of the functional core of the 30S ribosomal subunit. Associates with free 30S ribosomal subunits (but not with 30S subunits that are part of 70S ribosomes or polysomes). Required for efficient processing of 16S rRNA. May interact with the 5'-terminal helix region of 16S rRNA. This Thermotoga sp. (strain RQ2) protein is Ribosome-binding factor A.